Reading from the N-terminus, the 152-residue chain is Proline-rich acidic protein 1 (152 aa).

Positions 1–20 (MKRFLLATCLVAVLLWEAGA) are cleaved as a signal peptide.

In terms of assembly, interacts with MTTP. Interacts with MAD1L1. Highly expressed in the small intestine where it shows a proximal-distal graded expression.

The protein resides in the secreted. It localises to the endoplasmic reticulum. Lipid-binding protein which promotes lipid absorption by facilitating MTTP-mediated lipid transfer (mainly triglycerides and phospholipids) and MTTP-mediated apoB lipoprotein assembly and secretion. Protects the gastrointestinal epithelium from irradiation-induced apoptosis. May play an important role in maintaining normal growth homeostasis in epithelial cells. Involved in p53/TP53-dependent cell survival after DNA damage. The polypeptide is Proline-rich acidic protein 1 (Prap1) (Rattus norvegicus (Rat)).